We begin with the raw amino-acid sequence, 263 residues long: Thiazole synthase (263 aa).

Lysine 100 serves as the catalytic Schiff-base intermediate with DXP. Residues glycine 161, 187–188, and 209–210 contribute to the 1-deoxy-D-xylulose 5-phosphate site; these read AG and NT.

This sequence belongs to the ThiG family. In terms of assembly, homotetramer. Forms heterodimers with either ThiH or ThiS.

Its subcellular location is the cytoplasm. The catalysed reaction is [ThiS sulfur-carrier protein]-C-terminal-Gly-aminoethanethioate + 2-iminoacetate + 1-deoxy-D-xylulose 5-phosphate = [ThiS sulfur-carrier protein]-C-terminal Gly-Gly + 2-[(2R,5Z)-2-carboxy-4-methylthiazol-5(2H)-ylidene]ethyl phosphate + 2 H2O + H(+). It functions in the pathway cofactor biosynthesis; thiamine diphosphate biosynthesis. Functionally, catalyzes the rearrangement of 1-deoxy-D-xylulose 5-phosphate (DXP) to produce the thiazole phosphate moiety of thiamine. Sulfur is provided by the thiocarboxylate moiety of the carrier protein ThiS. In vitro, sulfur can be provided by H(2)S. This Shouchella clausii (strain KSM-K16) (Alkalihalobacillus clausii) protein is Thiazole synthase.